The chain runs to 122 residues: ORF7a protein (122 aa).

The N-terminal stretch at 1-15 is a signal peptide; the sequence is MKIILFLTLIVFTSC. The X4e domain maps to 16–81; the sequence is ELYHYQECVR…RHTYQLRARS (66 aa). Over 16 to 96 the chain is Virion surface; it reads ELYHYQECVR…FIRQEEVQQE (81 aa). 2 cysteine pairs are disulfide-bonded: C23–C58 and C35–C67. Residues 97–117 form a helical membrane-spanning segment; that stretch reads LYSPLFLIVAALVFLILCFTI. Topologically, residues 118–122 are intravirion; the sequence is KRKTE. The short motif at 118–122 is the Di-lysine motif element; sequence KRKTE.

As to quaternary structure, interacts with the spike glycoprotein. Interacts with M protein. Interacts with E protein. Interacts with the ORF3a protein. Interacts with human SGT. Interacts with host ITGAL. Interacts with host BST2.

The protein resides in the virion. It localises to the host endoplasmic reticulum membrane. The protein localises to the host endoplasmic reticulum-Golgi intermediate compartment membrane. It is found in the host Golgi apparatus membrane. Plays a role as antagonist of host tetherin (BST2), disrupting its antiviral effect. Acts by binding to BST2 thereby interfering with its glycosylation. May suppress small interfering RNA (siRNA). May bind to host ITGAL, thereby playing a role in attachment or modulation of leukocytes. The protein is ORF7a protein of Severe acute respiratory syndrome coronavirus (SARS-CoV).